The sequence spans 43 residues: Defensin, isoforms B and C (43 aa).

Cystine bridges form between Cys-3–Cys-34, Cys-20–Cys-40, and Cys-24–Cys-42.

It belongs to the invertebrate defensin family. Type 1 subfamily.

It localises to the secreted. Functionally, involved in anti Gram-positive activity of immune hemolymph of Z.atratus. This Zophobas atratus (Giant mealworm beetle) protein is Defensin, isoforms B and C.